A 345-amino-acid chain; its full sequence is Heat-inducible transcription repressor HrcA (345 aa).

The protein belongs to the HrcA family.

Functionally, negative regulator of class I heat shock genes (grpE-dnaK-dnaJ and groELS operons). Prevents heat-shock induction of these operons. This is Heat-inducible transcription repressor HrcA from Desulfitobacterium hafniense (strain DSM 10664 / DCB-2).